We begin with the raw amino-acid sequence, 155 residues long: Protein-export protein SecB (155 aa).

This sequence belongs to the SecB family. Homotetramer, a dimer of dimers. One homotetramer interacts with 1 SecA dimer.

The protein resides in the cytoplasm. Its function is as follows. One of the proteins required for the normal export of preproteins out of the cell cytoplasm. It is a molecular chaperone that binds to a subset of precursor proteins, maintaining them in a translocation-competent state. It also specifically binds to its receptor SecA. This chain is Protein-export protein SecB, found in Escherichia coli O139:H28 (strain E24377A / ETEC).